We begin with the raw amino-acid sequence, 398 residues long: uncharacterized protein (398 aa).

The 117-residue stretch at 235-351 (VAIVEFSARR…DIVNALNAAL (117 aa)) folds into the CobW C-terminal domain.

This is an uncharacterized protein from Mycobacterium bovis (strain ATCC BAA-935 / AF2122/97).